The chain runs to 1679 residues: AF4/FMR2 family member lilli (1679 aa).

Disordered stretches follow at residues 1-21 (MAQQ…SSIN), 55-78 (NYNM…QQGI), 124-305 (RSAP…EKDV), 406-539 (LHQL…GAQN), 580-609 (MGAG…SNKW), 733-755 (DSGT…AVGG), 783-1172 (QPTQ…TTPH), and 1197-1319 (TPAQ…LQIG). The segment covering 69-78 (REKIERQQGI) has biased composition (basic and acidic residues). 2 stretches are compositionally biased toward low complexity: residues 144–181 (SLGH…QQQQ) and 212–244 (PSSS…SSGG). Position 421 is a phosphothreonine (Thr421). The segment covering 429 to 442 (LKTEKNHSLEKQDS) has biased composition (basic and acidic residues). The span at 444-455 (LENDLELSESED) shows a compositional bias: acidic residues. Ser451 and Ser453 each carry phosphoserine. Low complexity predominate over residues 464-484 (SAGNSSNSSESDSSESGSESS). Residues 492–501 (HPNHQQHHHQ) are compositionally biased toward basic residues. The span at 502 to 532 (LQQQQQQQQQQASMQQQQVLQQQQQHRPQPL) shows a compositional bias: low complexity. Positions 582–591 (AGSGSGGTLS) are enriched in gly residues. Positions 598-609 (NKTPSPTESNKW) are enriched in polar residues. Residues 733–752 (DSGTSASGSSSSSSSSSDSA) show a composition bias toward low complexity. Polar residues predominate over residues 783 to 796 (QPTQSQKAPPSNSV). Residues 810 to 820 (QRQKKPRKKKA) show a composition bias toward basic residues. Ser829 and Ser830 each carry phosphoserine. The segment at residues 859 to 871 (KKGRGRPRKQQQS) is a DNA-binding region (a.T hook). Positions 868-906 (QQQSGGSGNLSSASAGSSSQTKGPTLTAAKKPLAKTPLA) are enriched in low complexity. Phosphoserine occurs at positions 879 and 881. A compositionally biased stretch (polar residues) spans 917–927 (SQSSSNGNTPT). Composition is skewed to low complexity over residues 957 to 973 (SSSA…SSSS) and 1001 to 1012 (GSGSSSPSSSGS). Residues 1019–1030 (TRSQVGSGQALA) are compositionally biased toward polar residues. Residues 1042 to 1068 (SQHSQHLSSSECSSSSGGCTAVCSSSS) show a composition bias toward low complexity. The segment covering 1073-1090 (EGRREKERERKPKSDKNK) has biased composition (basic and acidic residues). Pro residues predominate over residues 1130 to 1140 (QPPPPQAPPAA). Residues 1198-1213 (PAQQNGHLTPKDQATN) show a composition bias toward polar residues. 2 stretches are compositionally biased toward basic and acidic residues: residues 1234–1251 (EHPV…EAKF) and 1260–1288 (FQLK…EQPP). Ser1368 is subject to Phosphoserine. At Thr1370 the chain carries Phosphothreonine. Residues 1569–1589 (GNTPSSISPSNSVGSQGSGSN) show a composition bias toward low complexity. Residues 1569-1594 (GNTPSSISPSNSVGSQGSGSNTPPGR) are disordered.

Belongs to the AF4 family.

Its subcellular location is the nucleus. Its function is as follows. Has a role in transcriptional regulation. Acts in parallel with the Ras/MAPK and the PI3K/PKB pathways in the control of cell identity and cellular growth. Essential for regulation of the cytoskeleton and cell growth but not for cell proliferation or growth rate. Required specifically for the microtubule-based basal transport of lipid droplets. Plays a partially redundant function downstream of Raf in cell fate specification in the developing eye. Pair-rule protein that regulates embryonic cellularization, gastrulation and segmentation. This Drosophila erecta (Fruit fly) protein is AF4/FMR2 family member lilli.